We begin with the raw amino-acid sequence, 277 residues long: Large ribosomal subunit protein uL2 (277 aa).

Disordered stretches follow at residues 38–58 and 219–277; these read HRKG…GGGH and TVRG…RKNK.

Belongs to the universal ribosomal protein uL2 family. Part of the 50S ribosomal subunit. Forms a bridge to the 30S subunit in the 70S ribosome.

Its function is as follows. One of the primary rRNA binding proteins. Required for association of the 30S and 50S subunits to form the 70S ribosome, for tRNA binding and peptide bond formation. It has been suggested to have peptidyltransferase activity; this is somewhat controversial. Makes several contacts with the 16S rRNA in the 70S ribosome. The sequence is that of Large ribosomal subunit protein uL2 from Bacillus pumilus (strain SAFR-032).